A 74-amino-acid polypeptide reads, in one-letter code: Translation initiation factor IF-1 (74 aa).

Residues Met-1 to Arg-72 enclose the S1-like domain.

The protein belongs to the IF-1 family. In terms of assembly, component of the 30S ribosomal translation pre-initiation complex which assembles on the 30S ribosome in the order IF-2 and IF-3, IF-1 and N-formylmethionyl-tRNA(fMet); mRNA recruitment can occur at any time during PIC assembly.

The protein localises to the cytoplasm. Functionally, one of the essential components for the initiation of protein synthesis. Stabilizes the binding of IF-2 and IF-3 on the 30S subunit to which N-formylmethionyl-tRNA(fMet) subsequently binds. Helps modulate mRNA selection, yielding the 30S pre-initiation complex (PIC). Upon addition of the 50S ribosomal subunit IF-1, IF-2 and IF-3 are released leaving the mature 70S translation initiation complex. The polypeptide is Translation initiation factor IF-1 (Acaryochloris marina (strain MBIC 11017)).